A 259-amino-acid polypeptide reads, in one-letter code: Sesquipedalian-2 (259 aa).

In terms of domain architecture, PH spans 17-121; that stretch reads PADHTGFLRS…WVKALSRASF (105 aa). Residues 124 to 150 adopt a coiled-coil conformation; the sequence is MRLVVRELESQLQDARQSLALHRCASQ. A disordered region spans residues 155 to 178; sequence SCSKSQAPDHRAPDPENGHFLPRD. Positions 161 to 178 are enriched in basic and acidic residues; sequence APDHRAPDPENGHFLPRD. Positions 223–235 match the F&amp;H motif; sequence CFSTLHDWYGKEI.

Belongs to the sesquipedalian family. As to quaternary structure, forms homodimers and heterodimers with PHETA1. Interacts with OCRL and INPP5B.

It is found in the early endosome. Its subcellular location is the recycling endosome. The protein localises to the golgi apparatus. It localises to the trans-Golgi network. The protein resides in the cytoplasmic vesicle. It is found in the clathrin-coated vesicle. Functionally, plays a role in endocytic trafficking. Required for receptor recycling from endosomes, both to the trans-Golgi network and the plasma membrane. In Mus musculus (Mouse), this protein is Sesquipedalian-2.